The primary structure comprises 77 residues: MKEQKWIHEGLITESLPNGMFRVRLDNEDLILGYVSGKIRRSFIRILPGDRVKIEVSRYDSSRGRIIYRLRNKDSND.

The S1-like domain occupies 1–71 (MKEQKWIHEG…SRGRIIYRLR (71 aa)).

It belongs to the IF-1 family. Component of the 30S ribosomal translation pre-initiation complex which assembles on the 30S ribosome in the order IF-2 and IF-3, IF-1 and N-formylmethionyl-tRNA(fMet); mRNA recruitment can occur at any time during PIC assembly.

It localises to the plastid. Its subcellular location is the chloroplast. One of the essential components for the initiation of protein synthesis. Stabilizes the binding of IF-2 and IF-3 on the 30S subunit to which N-formylmethionyl-tRNA(fMet) subsequently binds. Helps modulate mRNA selection, yielding the 30S pre-initiation complex (PIC). Upon addition of the 50S ribosomal subunit IF-1, IF-2 and IF-3 are released leaving the mature 70S translation initiation complex. The polypeptide is Translation initiation factor IF-1, chloroplastic (Buxus microphylla (Littleleaf boxwood)).